Here is a 145-residue protein sequence, read N- to C-terminus: Small ribosomal subunit protein uS19 (145 aa).

The residue at position 2 (A2) is an N-acetylalanine. K108 participates in a covalent cross-link: Glycyl lysine isopeptide (Lys-Gly) (interchain with G-Cter in SUMO2).

Belongs to the universal ribosomal protein uS19 family. In terms of assembly, component of the small ribosomal subunit.

The protein localises to the cytoplasm. In terms of biological role, component of the small ribosomal subunit. The ribosome is a large ribonucleoprotein complex responsible for the synthesis of proteins in the cell. This chain is Small ribosomal subunit protein uS19 (RPS15), found in Oryctolagus cuniculus (Rabbit).